The following is a 166-amino-acid chain: Sec-independent protein translocase protein TatB (166 aa).

The chain crosses the membrane as a helical span at residues 2-22 (FNDIGALELLTLGVLAVLVFG). The tract at residues 110–166 (TPAASDTANSAVNGSAGAAADGVTTSLTKTGETTPDLLKKAPQQAQPERPPFDADAT) is disordered. The span at 117-129 (ANSAVNGSAGAAA) shows a compositional bias: low complexity. Polar residues predominate over residues 132-142 (VTTSLTKTGET).

Belongs to the TatB family. The Tat system comprises two distinct complexes: a TatABC complex, containing multiple copies of TatA, TatB and TatC subunits, and a separate TatA complex, containing only TatA subunits. Substrates initially bind to the TatABC complex, which probably triggers association of the separate TatA complex to form the active translocon.

Its subcellular location is the cell membrane. In terms of biological role, part of the twin-arginine translocation (Tat) system that transports large folded proteins containing a characteristic twin-arginine motif in their signal peptide across membranes. Together with TatC, TatB is part of a receptor directly interacting with Tat signal peptides. TatB may form an oligomeric binding site that transiently accommodates folded Tat precursor proteins before their translocation. In Streptomyces griseus subsp. griseus (strain JCM 4626 / CBS 651.72 / NBRC 13350 / KCC S-0626 / ISP 5235), this protein is Sec-independent protein translocase protein TatB.